The primary structure comprises 231 residues: Transmembrane gamma-carboxyglutamic acid protein 3 (231 aa).

Residues 1-19 constitute a propeptide that is removed on maturation; it reads MAVFLEAKDAHSVLKRFPR. The Gla domain occupies 20 to 65; sequence ANEFLEELRQGTIERECMEEICSYEEVKEVFENKEKTMEFWKGYPN. At 20–78 the chain is on the extracellular side; it reads ANEFLEELRQGTIERECMEEICSYEEVKEVFENKEKTMEFWKGYPNAVYSVRDPSQSSD. E22, E25, E26, E33, E35, E38, E39, E44, E45, E48, E51, E54, and E58 each carry 4-carboxyglutamate. Cysteines 36 and 41 form a disulfide. Residues 79–101 form a helical membrane-spanning segment; sequence AMYVVVPLLGVALLIVIALFIIW. Topologically, residues 102–231 are cytoplasmic; the sequence is RCQLQKATRH…IVAANPGADK (130 aa). Disordered stretches follow at residues 140–165 and 182–231; these read HSQGEPSGHREAANSPQVVLGPSRGG and LSRL…GADK. The span at 202–213 shows a compositional bias: low complexity; the sequence is ESSSEEASVSYS.

Gla residues are produced after subsequent post-translational modifications of glutamate by a vitamin K-dependent gamma-carboxylase. In terms of tissue distribution, expressed in brain, lung, kidney and heart.

It localises to the membrane. The protein is Transmembrane gamma-carboxyglutamic acid protein 3 (PRRG3) of Homo sapiens (Human).